The chain runs to 2569 residues: Highly reducing polyketide synthase pks5 (2569 aa).

Residues 1-25 are disordered; it reads MVVKFANGVRNRGNGDEGQRGTQRP. The 426-residue stretch at 27–452 folds into the Ketosynthase family 3 (KS3) domain; the sequence is STPIAIVGMS…GTNVHVIMEA (426 aa). Catalysis depends on for beta-ketoacyl synthase activity residues C200, H335, and H375. The tract at residues 572–892 is malonyl-CoA:ACP transacylase (MAT) domain; sequence IFNGQGAQWY…PYLSCLRRNI (321 aa). Residues 960–1097 are N-terminal hotdog fold; sequence HELLGSSVPG…GYVSAEDSSK (138 aa). Residues 960 to 1268 form a dehydratase (DH) domain region; the sequence is HELLGSSVPG…LRLQKIQAED (309 aa). One can recognise a PKS/mFAS DH domain in the interval 960–1270; the sequence is HELLGSSVPG…LQKIQAEDDN (311 aa). H992 serves as the catalytic Proton acceptor; for dehydratase activity. A C-terminal hotdog fold region spans residues 1117–1270; it reads RVRHVRPDAM…LQKIQAEDDN (154 aa). Catalysis depends on D1179, which acts as the Proton donor; for dehydratase activity. The segment at 1457 to 1567 is methyltransferase (CMet) domain; the sequence is LEVGAGTGGA…RKLLKPKGKL (111 aa). The tract at residues 1855 to 2170 is enoyl reductase (ER) domain; it reads DLLNKIEFLE…SGTHMGKIVL (316 aa). The segment at 2195 to 2371 is ketoreductase (KR) domain; the sequence is THLIVGGLRG…AISINLGPVD (177 aa). The region spanning 2485–2562 is the Carrier domain; the sequence is AARKLVSELI…DFAALVASRS (78 aa). At S2522 the chain carries O-(pantetheine 4'-phosphoryl)serine.

Highly reducing polyketide synthase; part of the gene cluster that mediates the biosynthesis of abscisic acid (ABA), a phytohormone that acts antagonistically toward salicylic acid (SA), jasmonic acid (JA) and ethylene (ETH) signaling, to impede plant defense responses. The first step of the pathway catalyzes the reaction from farnesyl diphosphate to alpha-ionylideneethane performed by the alpha-ionylideneethane synthase abl3 via a three-step reaction mechanism involving 2 neutral intermediates, beta-farnesene and allofarnesene. The cytochrome P450 monooxygenase abl1 might then be involved in the conversion of alpha-ionylideneethane to alpha-ionylideneacetic acid. Alpha-ionylideneacetic acid is further converted to abscisic acid in 2 steps involving the cytochrome P450 monooxygenase abl2 and the short-chain dehydrogenase/reductase abl4, via the intermediates 1'-deoxy-ABA or 1',4'-trans-diol-ABA, depending on the order of action of these 2 enzymes. Abl2 is responsible for the hydroxylation of carbon atom C-1' and abl4 might be involved in the oxidation of the C-4' carbon atom. Pks5 is clearly not involved in the production of ABA. Nonetheless, the possibility cannot be excluded that pks5 may modify ABA into another compound. It also cannot be excluded the possibility that pks5 also has a function completely independent of ABA synthesis. Pks5 is not required for pathogenicity on B.napus cotyledon. The polypeptide is Highly reducing polyketide synthase pks5 (Leptosphaeria maculans (strain JN3 / isolate v23.1.3 / race Av1-4-5-6-7-8) (Blackleg fungus)).